A 397-amino-acid polypeptide reads, in one-letter code: DNA excision repair protein ERCC-8 (397 aa).

WD repeat units lie at residues 41–81, 97–137, 184–224, 243–282, and 332–371; these read IHCS…RQPY, VHKY…IADV, GHRQ…GCLI, AHNGKVNGLCFTSDGLHLLTVGTDNRMRLWNSSNGENTLV, and GHYKSVDCCVFQSNFQELYSGSRDCNILAWVPSLCESVPD. Positions 370-397 are disordered; that stretch reads PDDDDETSTRSQLNPAFEDAWSSSDEEG. 3 positions are modified to phosphoserine: Ser-391, Ser-392, and Ser-393.

Part of the CSA complex (also named DCX(ERCC8) complex), a DCX E3 ubiquitin-protein ligase complex containing ERCC8, RBX1, DDB1 and CUL4A; the CSA complex interacts with RNA polymerase II; upon UV irradiation it interacts with the COP9 signalosome and preferentially with the hyperphosphorylated form of RNA polymerase II. Interacts with ERCC6/CSB (via CIM motif); promoting recruitment to lesion-stalled RNA polymerase II (Pol II). Interacts with KIAA1530/UVSSA. Interacts with a subunit of RNA polymerase II TFIIH.

The protein localises to the nucleus. It localises to the chromosome. It is found in the nucleus matrix. It functions in the pathway protein modification; protein ubiquitination. Its function is as follows. Substrate-recognition component of the CSA complex, a DCX (DDB1-CUL4-X-box) E3 ubiquitin-protein ligase complex, involved in transcription-coupled nucleotide excision repair (TC-NER), a process during which RNA polymerase II-blocking lesions are rapidly removed from the transcribed strand of active genes. Following recruitment to lesion-stalled RNA polymerase II (Pol II), the CSA complex mediates ubiquitination of Pol II subunit POLR2A/RPB1 at 'Lys-1268', a critical TC-NER checkpoint, governing RNA Pol II stability and initiating DNA damage excision by TFIIH recruitment. The CSA complex also promotes the ubiquitination and subsequent proteasomal degradation of ERCC6/CSB in a UV-dependent manner; ERCC6 degradation is essential for the recovery of RNA synthesis after transcription-coupled repair. Also plays a role in DNA double-strand breaks (DSSBs) repair by non-homologous end joining (NHEJ). The polypeptide is DNA excision repair protein ERCC-8 (ERCC8) (Bos taurus (Bovine)).